A 529-amino-acid polypeptide reads, in one-letter code: Cytochrome P450 monooxygenase oblE (529 aa).

A helical membrane pass occupies residues 38–58 (WQYIVTLLIAIITYDQVMYIW). Residue cysteine 477 participates in heme binding.

Belongs to the cytochrome P450 family. The cofactor is heme.

It is found in the membrane. It participates in secondary metabolite biosynthesis; terpenoid biosynthesis. Its function is as follows. Cytochrome P450 monooxygenase; part of the gene cluster that mediates the biosynthesis of the sesterterpenes ophiobolins, fungal phytotoxins with potential anti-cancer activities. The first step of the pathway is performed by the sesterterpene synthase oblA that possesses both prenyl transferase and terpene cyclase activity, converting isopentenyl diphosphate and dimethylallyl diphosphate into geranylfarnesyl diphosphate (GFPP) and further converting GFPP into ophiobolin F, respectively. Other sesterterpenoids (C(25) terpenoids) are found as minor products of oblA. The cytochrome P450 monooxygenase oblB then catalyzes a four-step oxidative transformation of ophiobolin F to yield ophiobolin C. The function of the cytochrome P450 monooxygenase oblE has still to be determined. The chain is Cytochrome P450 monooxygenase oblE from Emericella variicolor (Aspergillus stellatus).